The sequence spans 212 residues: Probable nicotinate-nucleotide adenylyltransferase (212 aa).

Belongs to the NadD family.

The enzyme catalyses nicotinate beta-D-ribonucleotide + ATP + H(+) = deamido-NAD(+) + diphosphate. The protein operates within cofactor biosynthesis; NAD(+) biosynthesis; deamido-NAD(+) from nicotinate D-ribonucleotide: step 1/1. Functionally, catalyzes the reversible adenylation of nicotinate mononucleotide (NaMN) to nicotinic acid adenine dinucleotide (NaAD). The chain is Probable nicotinate-nucleotide adenylyltransferase from Chromobacterium violaceum (strain ATCC 12472 / DSM 30191 / JCM 1249 / CCUG 213 / NBRC 12614 / NCIMB 9131 / NCTC 9757 / MK).